Reading from the N-terminus, the 429-residue chain is UDP-N-acetylglucosamine 1-carboxyvinyltransferase (429 aa).

22-23 (KN) contacts phosphoenolpyruvate. UDP-N-acetyl-alpha-D-glucosamine is bound at residue R96. Catalysis depends on C120, which acts as the Proton donor. 2-(S-cysteinyl)pyruvic acid O-phosphothioketal is present on C120. Residues 125–129 (RPVDL), D310, and I332 each bind UDP-N-acetyl-alpha-D-glucosamine.

This sequence belongs to the EPSP synthase family. MurA subfamily.

Its subcellular location is the cytoplasm. It carries out the reaction phosphoenolpyruvate + UDP-N-acetyl-alpha-D-glucosamine = UDP-N-acetyl-3-O-(1-carboxyvinyl)-alpha-D-glucosamine + phosphate. It functions in the pathway cell wall biogenesis; peptidoglycan biosynthesis. Its function is as follows. Cell wall formation. Adds enolpyruvyl to UDP-N-acetylglucosamine. This is UDP-N-acetylglucosamine 1-carboxyvinyltransferase from Caulobacter vibrioides (strain ATCC 19089 / CIP 103742 / CB 15) (Caulobacter crescentus).